The primary structure comprises 363 residues: Dihydroorotate dehydrogenase (quinone) (363 aa).

FMN contacts are provided by residues 77 to 81 and T101; that span reads AGMDK. K81 contacts substrate. Position 126–130 (126–130) interacts with substrate; it reads NRMGF. Residues S155 and N188 each coordinate FMN. N188 lines the substrate pocket. S191 serves as the catalytic Nucleophile. N193 is a substrate binding site. 2 residues coordinate FMN: K234 and T262. 263–264 serves as a coordination point for substrate; that stretch reads NT. FMN-binding positions include G287, G316, and 337-338; that span reads YT.

This sequence belongs to the dihydroorotate dehydrogenase family. Type 2 subfamily. In terms of assembly, monomer. The cofactor is FMN.

Its subcellular location is the cell membrane. The enzyme catalyses (S)-dihydroorotate + a quinone = orotate + a quinol. It functions in the pathway pyrimidine metabolism; UMP biosynthesis via de novo pathway; orotate from (S)-dihydroorotate (quinone route): step 1/1. Catalyzes the conversion of dihydroorotate to orotate with quinone as electron acceptor. The protein is Dihydroorotate dehydrogenase (quinone) of Chloroflexus aurantiacus (strain ATCC 29366 / DSM 635 / J-10-fl).